We begin with the raw amino-acid sequence, 360 residues long: 3-dehydroquinate synthase (360 aa).

NAD(+) is bound by residues 71-76, 105-109, 129-130, K142, and K151; these read DGEAHK, GVVGD, and TT. 3 residues coordinate Zn(2+): E184, H247, and H264.

The protein belongs to the sugar phosphate cyclases superfamily. Dehydroquinate synthase family. It depends on Co(2+) as a cofactor. Zn(2+) serves as cofactor. NAD(+) is required as a cofactor.

It is found in the cytoplasm. It catalyses the reaction 7-phospho-2-dehydro-3-deoxy-D-arabino-heptonate = 3-dehydroquinate + phosphate. It participates in metabolic intermediate biosynthesis; chorismate biosynthesis; chorismate from D-erythrose 4-phosphate and phosphoenolpyruvate: step 2/7. Its function is as follows. Catalyzes the conversion of 3-deoxy-D-arabino-heptulosonate 7-phosphate (DAHP) to dehydroquinate (DHQ). This Azoarcus sp. (strain BH72) protein is 3-dehydroquinate synthase.